Consider the following 186-residue polypeptide: MASDMPLVQLPQRGERINVPLVQSRSEDQRLVTSARQTDKIDADDLVALANQLNSARQLVKGRACDRLKQIADQMEQLHMAARAVLEDAQRDEHLHNVPCNMEKQPGRIYHLYQKQGSMNKYFSMLAPNEWGYQEKKEEYLGSYRLEYDRSWTPVGEMDRKDEEVARLQQLLQREGPVALRGNPNF.

This is an uncharacterized protein from Caenorhabditis elegans.